A 1136-amino-acid chain; its full sequence is Rho GTPase-activating protein 45 (1136 aa).

2 disordered regions span residues 1–73 (MFSR…RHAS) and 91–110 (HRSP…GAGP). 5 positions are modified to phosphoserine: Ser-23, Ser-25, Ser-73, Ser-93, and Ser-99. Residues 269–539 (EEVDVLLQRC…SSKLYDPGQQ (271 aa)) enclose the F-BAR domain. Coiled coils occupy residues 376-412 (EHEK…YVQR) and 440-499 (TATK…RQSD). Phosphoserine is present on residues Ser-569, Ser-578, Ser-592, and Ser-619. The disordered stretch occupies residues 583–662 (DVARPEAAGS…SSTEELVDPD (80 aa)). Positions 646–655 (TSSSGTMSST) are enriched in low complexity. The segment at 702–747 (THRLRKLRTPAKCRECNSYVYFQGAECEECCLACHKKCLETLAIQC) adopts a Phorbol-ester/DAG-type zinc-finger fold. One can recognise a Rho-GAP domain in the interval 761-974 (QDFSHAARSA…TLIVHYGLVF (214 aa)). Phosphoserine is present on residues Ser-949, Ser-1027, Ser-1030, and Ser-1032. The interval 1061 to 1136 (EASLEVASGS…SCRERQPEFV (76 aa)) is disordered. Polar residues predominate over residues 1095 to 1109 (QQLSGFNTNQSNNVL).

HA-1 forms a complex with MHC class I HLA-A*0201. Expressed on cells of the hematopoietic lineage. Detected in dendritic cells and epidermal Langerhans cells. Expressed in peripheral blood mononuclear cells, in all leukemia/lymphoma cell lines. Detected also in some solid tumors and tissues such as cancerous and non-cancerous tissue.

The protein resides in the cytoplasm. The protein localises to the cell projection. Its subcellular location is the ruffle membrane. Functionally, contains a GTPase activator for the Rho-type GTPases (RhoGAP) domain that would be able to negatively regulate the actin cytoskeleton as well as cell spreading. However, also contains N-terminally a BAR-domin which is able to play an autoinhibitory effect on this RhoGAP activity. In terms of biological role, precursor of the histocompatibility antigen HA-1. More generally, minor histocompatibility antigens (mHags) refer to immunogenic peptide which, when complexed with MHC, can generate an immune response after recognition by specific T-cells. The peptides are derived from polymorphic intracellular proteins, which are cleaved by normal pathways of antigen processing. The binding of these peptides to MHC class I or class II molecules and its expression on the cell surface can stimulate T-cell responses and thereby trigger graft rejection or graft-versus-host disease (GVHD) after hematopoietic stem cell transplantation from HLA-identical sibling donor. GVHD is a frequent complication after bone marrow transplantation (BMT), due to mismatch of minor histocompatibility antigen in HLA-matched sibling marrow transplants. Specifically, mismatching for mHag HA-1 which is recognized as immunodominant, is shown to be associated with the development of severe GVHD after HLA-identical BMT. HA-1 is presented to the cell surface by MHC class I HLA-A*0201, but also by other HLA-A alleles. This complex specifically elicits donor-cytotoxic T-lymphocyte (CTL) reactivity against hematologic malignancies after treatment by HLA-identical allogenic BMT. It induces cell recognition and lysis by CTL. The sequence is that of Rho GTPase-activating protein 45 from Homo sapiens (Human).